Consider the following 366-residue polypeptide: 5-amino-6-(D-ribitylamino)uracil--L-tyrosine 4-hydroxyphenyl transferase (366 aa).

The Radical SAM core domain maps to 51–290 (RCGNAITWVK…MIAISRLFLD (240 aa)). [4Fe-4S] cluster is bound by residues Cys70, Cys74, and Cys77.

This sequence belongs to the radical SAM superfamily. CofH family. As to quaternary structure, consists of two subunits, CofG and CofH. Requires [4Fe-4S] cluster as cofactor.

The enzyme catalyses 5-amino-6-(D-ribitylamino)uracil + L-tyrosine + S-adenosyl-L-methionine = 5-amino-5-(4-hydroxybenzyl)-6-(D-ribitylimino)-5,6-dihydrouracil + 2-iminoacetate + 5'-deoxyadenosine + L-methionine + H(+). The protein operates within cofactor biosynthesis; coenzyme F0 biosynthesis. In terms of biological role, catalyzes the radical-mediated synthesis of 5-amino-5-(4-hydroxybenzyl)-6-(D-ribitylimino)-5,6-dihydrouracil from 5-amino-6-(D-ribitylamino)uracil and L-tyrosine. In Methanospirillum hungatei JF-1 (strain ATCC 27890 / DSM 864 / NBRC 100397 / JF-1), this protein is 5-amino-6-(D-ribitylamino)uracil--L-tyrosine 4-hydroxyphenyl transferase.